Here is a 635-residue protein sequence, read N- to C-terminus: Chaperone protein HtpG (635 aa).

Residues 1 to 343 (MSVETQKETL…SNDLSLNVSR (343 aa)) form an a; substrate-binding region. Residues 344–560 (EILQKDPIID…EQDMGLQMRQ (217 aa)) form a b region. The tract at residues 561-635 (ILEASGQKVP…LNKLLVELSV (75 aa)) is c.

It belongs to the heat shock protein 90 family. Homodimer.

The protein resides in the cytoplasm. Molecular chaperone. Has ATPase activity. This is Chaperone protein HtpG from Pseudomonas syringae pv. tomato (strain ATCC BAA-871 / DC3000).